The following is a 434-amino-acid chain: D-amino acid dehydrogenase (434 aa).

3–17 lines the FAD pocket; the sequence is VIVLGSGVIGTTTAY.

The protein belongs to the DadA oxidoreductase family. The cofactor is FAD.

The enzyme catalyses a D-alpha-amino acid + A + H2O = a 2-oxocarboxylate + AH2 + NH4(+). The protein operates within amino-acid degradation; D-alanine degradation; NH(3) and pyruvate from D-alanine: step 1/1. Functionally, oxidative deamination of D-amino acids. The protein is D-amino acid dehydrogenase of Bordetella petrii (strain ATCC BAA-461 / DSM 12804 / CCUG 43448).